We begin with the raw amino-acid sequence, 191 residues long: Flagellar transcriptional regulator FlhC (191 aa).

The Zn(2+) site is built by cysteine 137, cysteine 140, cysteine 157, and cysteine 160.

The protein belongs to the FlhC family. Heterohexamer composed of two FlhC and four FlhD subunits. Each FlhC binds a FlhD dimer, forming a heterotrimer, and a hexamer assembles by dimerization of two heterotrimers. The cofactor is Zn(2+).

The protein resides in the cytoplasm. Its function is as follows. Functions in complex with FlhD as a master transcriptional regulator that regulates transcription of several flagellar and non-flagellar operons by binding to their promoter region. Activates expression of class 2 flagellar genes, including fliA, which is a flagellum-specific sigma factor that turns on the class 3 genes. Also regulates genes whose products function in a variety of physiological pathways. The protein is Flagellar transcriptional regulator FlhC of Nitrosomonas eutropha (strain DSM 101675 / C91 / Nm57).